Here is a 289-residue protein sequence, read N- to C-terminus: Protease HtpX homolog (289 aa).

The next 2 helical transmembrane spans lie at 3–23 (IVGT…WFFF) and 28–48 (TILA…YKVG). Residue H129 participates in Zn(2+) binding. E130 is an active-site residue. A Zn(2+)-binding site is contributed by H133. Helical transmembrane passes span 144 to 164 (LGQG…LFSG) and 172 to 192 (FLAI…VLAI). Residue E197 participates in Zn(2+) binding. Residues 222 to 250 (SQGNEQAAQQQRQRTSRGRGRRQRGQRND) form a disordered region. Residues 235–246 (RTSRGRGRRQRG) show a composition bias toward basic residues.

Belongs to the peptidase M48B family. Requires Zn(2+) as cofactor.

Its subcellular location is the cell membrane. The polypeptide is Protease HtpX homolog (Halobacterium salinarum (strain ATCC 700922 / JCM 11081 / NRC-1) (Halobacterium halobium)).